The sequence spans 218 residues: Small ribosomal subunit protein uS3 (218 aa).

In terms of domain architecture, KH type-2 spans 2–71; the sequence is SAPQRRLPVY…IGRKGAIVKE (70 aa).

Belongs to the universal ribosomal protein uS3 family. Part of the 30S ribosomal subunit.

Its function is as follows. Binds the lower part of the 30S subunit head. The polypeptide is Small ribosomal subunit protein uS3 (Pyrobaculum aerophilum (strain ATCC 51768 / DSM 7523 / JCM 9630 / CIP 104966 / NBRC 100827 / IM2)).